A 438-amino-acid polypeptide reads, in one-letter code: Proline--tRNA ligase (438 aa).

This sequence belongs to the class-II aminoacyl-tRNA synthetase family. ProS type 2 subfamily. As to quaternary structure, homodimer.

The protein localises to the cytoplasm. It catalyses the reaction tRNA(Pro) + L-proline + ATP = L-prolyl-tRNA(Pro) + AMP + diphosphate. Functionally, catalyzes the attachment of proline to tRNA(Pro) in a two-step reaction: proline is first activated by ATP to form Pro-AMP and then transferred to the acceptor end of tRNA(Pro). The protein is Proline--tRNA ligase of Rickettsia canadensis (strain McKiel).